Consider the following 202-residue polypeptide: Protein GrpE 1 (202 aa).

Belongs to the GrpE family. In terms of assembly, homodimer.

Its subcellular location is the cytoplasm. Participates actively in the response to hyperosmotic and heat shock by preventing the aggregation of stress-denatured proteins, in association with DnaK and GrpE. It is the nucleotide exchange factor for DnaK and may function as a thermosensor. Unfolded proteins bind initially to DnaJ; upon interaction with the DnaJ-bound protein, DnaK hydrolyzes its bound ATP, resulting in the formation of a stable complex. GrpE releases ADP from DnaK; ATP binding to DnaK triggers the release of the substrate protein, thus completing the reaction cycle. Several rounds of ATP-dependent interactions between DnaJ, DnaK and GrpE are required for fully efficient folding. This is Protein GrpE 1 from Buchnera aphidicola subsp. Schizaphis graminum (strain Sg).